The sequence spans 361 residues: UDP-3-O-acylglucosamine N-acyltransferase (361 aa).

His253 serves as the catalytic Proton acceptor.

This sequence belongs to the transferase hexapeptide repeat family. LpxD subfamily. In terms of assembly, homotrimer.

It carries out the reaction a UDP-3-O-[(3R)-3-hydroxyacyl]-alpha-D-glucosamine + a (3R)-hydroxyacyl-[ACP] = a UDP-2-N,3-O-bis[(3R)-3-hydroxyacyl]-alpha-D-glucosamine + holo-[ACP] + H(+). The protein operates within bacterial outer membrane biogenesis; LPS lipid A biosynthesis. In terms of biological role, catalyzes the N-acylation of UDP-3-O-acylglucosamine using 3-hydroxyacyl-ACP as the acyl donor. Is involved in the biosynthesis of lipid A, a phosphorylated glycolipid that anchors the lipopolysaccharide to the outer membrane of the cell. The chain is UDP-3-O-acylglucosamine N-acyltransferase from Burkholderia pseudomallei (strain 668).